Reading from the N-terminus, the 585-residue chain is Glycerol-3-phosphate acyltransferase 1 (585 aa).

3 helical membrane-spanning segments follow: residues 126–146, 334–354, and 356–376; these read FFPY…AILL, TPLA…LAVF, and ISVG…MSGV. An HXXXXD motif motif is present at residues 403 to 408; the sequence is HRTLLD.

The protein belongs to the GPAT/DAPAT family. As to expression, highly expressed in developing siliques and flower buds. Weakly or not expressed in roots, seedlings and leaves.

Its subcellular location is the membrane. The protein resides in the mitochondrion. The enzyme catalyses sn-glycerol 3-phosphate + an acyl-CoA = a 1-acyl-sn-glycero-3-phosphate + CoA. It participates in phospholipid metabolism; CDP-diacylglycerol biosynthesis; CDP-diacylglycerol from sn-glycerol 3-phosphate: step 1/3. Esterifies acyl-group from acyl-ACP to the sn-1 position of glycerol-3-phosphate, an essential step in glycerolipid biosynthesis. Involved in pollen development, by being required for tapetum differentiation and male fertility. In addition to the sporophytic effect, it also exerts a gametophytic effect on pollen performance. The chain is Glycerol-3-phosphate acyltransferase 1 (GPAT1) from Arabidopsis thaliana (Mouse-ear cress).